Here is a 561-residue protein sequence, read N- to C-terminus: Probable galacturonosyltransferase 9 (561 aa).

At 1-27 (MAVAFRGGRGGVGSGQSTGLRSFFSYR) the chain is on the cytoplasmic side. Residues 28-48 (IFISALFSFLFLATFSVVLNS) form a helical; Signal-anchor for type II membrane protein membrane-spanning segment. Over 49-561 (SRHQPHQDHT…EFVQMCNFGL (513 aa)) the chain is Lumenal. 4 N-linked (GlcNAc...) asparagine glycosylation sites follow: asparagine 124, asparagine 320, asparagine 346, and asparagine 426.

This sequence belongs to the glycosyltransferase 8 family. In terms of tissue distribution, expressed in roots, inflorescences, siliques, leaves and stems.

The protein localises to the golgi apparatus membrane. It functions in the pathway glycan metabolism; pectin biosynthesis. Functionally, may be involved in pectin synthesis. This Arabidopsis thaliana (Mouse-ear cress) protein is Probable galacturonosyltransferase 9 (GAUT9).